The sequence spans 118 residues: Basic phospholipase A2 1 (118 aa).

7 disulfides stabilise this stretch: C11–C72, C26–C117, C28–C44, C43–C98, C50–C91, C60–C84, and C78–C89. 3 residues coordinate Ca(2+): Y27, G29, and G31. H47 is an active-site residue. D48 is a Ca(2+) binding site. D92 is a catalytic residue.

This sequence belongs to the phospholipase A2 family. Group I subfamily. D49 sub-subfamily. The cofactor is Ca(2+). Expressed by the venom gland.

It localises to the secreted. The enzyme catalyses a 1,2-diacyl-sn-glycero-3-phosphocholine + H2O = a 1-acyl-sn-glycero-3-phosphocholine + a fatty acid + H(+). Functionally, PLA2 catalyzes the calcium-dependent hydrolysis of the 2-acyl groups in 3-sn-phosphoglycerides. This chain is Basic phospholipase A2 1, found in Naja melanoleuca (Forest cobra).